Consider the following 127-residue polypeptide: Protein SPIRAL1-like 4 (127 aa).

A disordered region spans residues methionine 1–lysine 127. Over residues threonine 39–threonine 48 the composition is skewed to low complexity. The residue at position 80 (serine 80) is a Phosphoserine. The segment covering serine 80 to asparagine 94 has biased composition (polar residues).

This sequence belongs to the SPIRAL1 family. In terms of tissue distribution, ubiquitous.

Functionally, acts redundantly with SPR1 in maintaining the cortical microtubules organization essential for anisotropic cell growth. The sequence is that of Protein SPIRAL1-like 4 (SP1L4) from Arabidopsis thaliana (Mouse-ear cress).